We begin with the raw amino-acid sequence, 339 residues long: Glyceraldehyde-3-phosphate dehydrogenase (339 aa).

Residues 12–13, Asp-35, and Lys-84 each bind NAD(+); that span reads RI. Residues 155–157, Thr-186, 215–216, and Arg-238 contribute to the D-glyceraldehyde 3-phosphate site; these read SCT and TG. The active-site Nucleophile is the Cys-156. Residue Asn-320 participates in NAD(+) binding.

Belongs to the glyceraldehyde-3-phosphate dehydrogenase family. Homotetramer.

The protein resides in the cytoplasm. The catalysed reaction is D-glyceraldehyde 3-phosphate + phosphate + NAD(+) = (2R)-3-phospho-glyceroyl phosphate + NADH + H(+). The protein operates within carbohydrate degradation; glycolysis; pyruvate from D-glyceraldehyde 3-phosphate: step 1/5. This Mastigamoeba balamuthi (Phreatamoeba balamuthi) protein is Glyceraldehyde-3-phosphate dehydrogenase (GAPD).